Consider the following 686-residue polypeptide: Leucine-rich repeat-containing protein 49 (686 aa).

7 LRR repeats span residues 113–134, 135–156, 157–178, 179–200, 201–222, 223–244, and 245–266; these read HLRLLNFQHNFITRIQNISNLQ, KLISLDLYDNQIEEISGLSTLR, CLRVLLLGKNRIKKISNLENLK, SLDVLDLHGNQITKIENINHLC, ELRVLNLARNFLSHVDNLNGLD, SLTELNLRHNQITFVRDVDNLP, and CLQHLFLSFNNISSFDSVSCLA. One can recognise an LRRCT domain in the interval 279–317; it reads NPIAQESWYKHTVLQNMMQLRQLDMKRITEEERRMASVL. Residues 303–341 adopt a coiled-coil conformation; sequence MKRITEEERRMASVLAKKEEEKKRESHKQSLLKEKKRLT. Residues 360 to 388 are disordered; that stretch reads ATNEDRKDSDSPQDPCQIDGSTLSAFPEE.

In terms of assembly, part of the neuronal tubulin polyglutamylase complex which contains TPGS1, TPGS2, TTLL1, LRRC49 and NICN1. Interacts with PCM1; TTLL1, TPGS1, TPGS2 and LRRC49.

It localises to the cytoplasm. The protein resides in the cytoskeleton. It is found in the microtubule organizing center. Its subcellular location is the centrosome. The protein localises to the centriolar satellite. Functionally, subunit of the tubulin polyglutamylase complex (TPGC). The complex mediates cilia and flagella polyglutamylation which is essential for their biogenesis and motility. The chain is Leucine-rich repeat-containing protein 49 from Homo sapiens (Human).